Reading from the N-terminus, the 353-residue chain is Paraneoplastic antigen Ma1 (353 aa).

The protein belongs to the PNMA family. As to expression, testis- and brain-specific. In some cancer patients, specifically expressed by paraneoplastic tumor cells.

Its subcellular location is the nucleus. It localises to the nucleolus. The chain is Paraneoplastic antigen Ma1 (PNMA1) from Homo sapiens (Human).